Reading from the N-terminus, the 312-residue chain is Malate dehydrogenase (312 aa).

Residues 7 to 13 (GAAGGIG) and Asp34 contribute to the NAD(+) site. Substrate is bound by residues Arg81 and Arg87. Residues Asn94 and 117–119 (ITN) contribute to the NAD(+) site. Residues Asn119 and Arg153 each coordinate substrate. Catalysis depends on His177, which acts as the Proton acceptor. An NAD(+)-binding site is contributed by Met227.

This sequence belongs to the LDH/MDH superfamily. MDH type 1 family. Homodimer.

The catalysed reaction is (S)-malate + NAD(+) = oxaloacetate + NADH + H(+). Catalyzes the reversible oxidation of malate to oxaloacetate. The polypeptide is Malate dehydrogenase (Photorhabdus laumondii subsp. laumondii (strain DSM 15139 / CIP 105565 / TT01) (Photorhabdus luminescens subsp. laumondii)).